The primary structure comprises 274 residues: MSKKAVPPIVKAQYELYNRKLNRAIKVSGSQKKLDASFVGFSESSNPETGKPHADMSMSAKVKRVNTWLKNFDREYWENQFASKPIPRPAKQVLKGSSSKSQQRDEGEVVFTRKDSQKSVRTVSYWVCTPEKSMKPLKYKEDENVVEVTFNDLAAQKAGDKLVSILLEINVVGGAVDDKGRVAVLEKDAAVTVDYLLGSPYEAINLVSGLNKINFRSMTDVVDSIPSLLNERKVCVFQNDDSSSFYIRKWANFLQEVSAVLPVGTGKSSTIVLT.

Residues 88–112 (RPAKQVLKGSSSKSQQRDEGEVVFT) are disordered. The segment covering 102–112 (QQRDEGEVVFT) has biased composition (basic and acidic residues).

The protein localises to the virion. This is Coat protein from Rubus idaeus (Raspberry).